Reading from the N-terminus, the 182-residue chain is NADH-quinone oxidoreductase subunit B (182 aa).

The [4Fe-4S] cluster site is built by C61, C62, C126, and C156.

The protein belongs to the complex I 20 kDa subunit family. NDH-1 is composed of 14 different subunits. Subunits NuoB, C, D, E, F, and G constitute the peripheral sector of the complex. The cofactor is [4Fe-4S] cluster.

The protein resides in the cell inner membrane. The enzyme catalyses a quinone + NADH + 5 H(+)(in) = a quinol + NAD(+) + 4 H(+)(out). Its function is as follows. NDH-1 shuttles electrons from NADH, via FMN and iron-sulfur (Fe-S) centers, to quinones in the respiratory chain. The immediate electron acceptor for the enzyme in this species is believed to be ubiquinone. Couples the redox reaction to proton translocation (for every two electrons transferred, four hydrogen ions are translocated across the cytoplasmic membrane), and thus conserves the redox energy in a proton gradient. The protein is NADH-quinone oxidoreductase subunit B of Xanthomonas oryzae pv. oryzae (strain PXO99A).